The chain runs to 18141 residues: Titin (18141 aa).

Positions 1-31 are enriched in low complexity; sequence MQRQNPNPYQQQNQQHQQVQQFSSQEYSHSS. Residues 1–69 are disordered; it reads MQRQNPNPYQ…QHHGGSIGGA (69 aa). Basic and acidic residues predominate over residues 32–47; it reads QEQHQEQRISRTEQHV. Low complexity predominate over residues 48-62; it reads QRSQVTTQRQVQQHH. Ig-like domains follow at residues 86–177, 255–343, 372–461, 471–559, 618–708, 751–842, 890–981, 1024–1115, 1158–1249, 1291–1381, 1424–1515, 1558–1643, 1691–1781, 1824–1917, 1958–2050, 2089–2180, and 2222–2313; these read PPVF…VYIQ, PQIS…AVLA, PAFV…AQLN, PQFV…ARLY, PQFI…AILS, PQFI…SSIR, PQFK…AQLT, PRFL…ATMI, PVFV…ACVR, PQFT…CSVR, PRFL…VELQ, PVFT…EAIT, PVFT…ASLI, PVFV…LNVT, PQFG…VNVT, PIFL…CNVR, and PHFT…TNLR. The interval 236 to 266 is disordered; the sequence is EQDSQLSQELDRNQGPAQAPQISQKPRSSKL. The cysteines at positions 393 and 445 are disulfide-linked. Intrachain disulfides connect Cys1312–Cys1365, Cys1446–Cys1499, and Cys1579–Cys1632. Cys1846 and Cys1899 form a disulfide bridge. Cysteines 2111 and 2164 form a disulfide. Residues 2338 to 2347 show a composition bias toward basic and acidic residues; sequence STAPHQRQEP. Residues 2338–2357 form a disordered region; that stretch reads STAPHQRQEPETPGTRQRPV. Ig-like domains follow at residues 2356-2449, 2488-2581, and 2622-2715; these read PVFT…MRVV, PIFT…MKVK, and PVFT…LKIE. The disordered stretch occupies residues 2731–2750; sequence PRIGELEAPKEGRPEAPEPT. Positions 2734–2746 are enriched in basic and acidic residues; that stretch reads GELEAPKEGRPEA. 9 consecutive Ig-like domains span residues 2754–2844, 2891–2983, 3029–3116, 3130–3221, 3263–3354, 3401–3494, 3539–3625, 3676–3767, and 3811–3901; these read PVFI…GTLK, PPVW…TTIF, PRFT…AEIS, PRFT…TTLN, PKFI…ASLK, PVFT…MKIQ, PEFI…ATVS, PKFT…AKVT, and PKFT…ATVS. A disulfide bridge connects residues Cys2775 and Cys2828. Cysteines 3152 and 3205 form a disulfide. Intrachain disulfides connect Cys3560–Cys3613, Cys3698–Cys3751, and Cys3832–Cys3885. A TPR 1 repeat occupies 3910–3944; it reads LQNQVPRGMKRSDALTQMEATIKKYTSEVHLTEDD. 2 consecutive Ig-like domains span residues 3954-4047 and 4092-4181; these read PRFV…IKVS and PVFV…LKVV. An intrachain disulfide couples Cys3976 to Cys4029. Residues 4204-4229 are a coiled coil; sequence AAYQKERQENELEKVFDERKQVLSEQ. Disordered stretches follow at residues 4226-4254 and 4299-4336; these read LSEQ…DWQQ and SSQA…PSES. The span at 4309–4322 shows a compositional bias: polar residues; sequence YEENLQEKTSTTEV. Ig-like domains follow at residues 4394–4482, 4497–4585, 4604–4692, and 4703–4791; these read PVFT…ANLV, PSFV…GDCI, PHIV…AQLK, and PTIT…AKLT. One copy of the TPR 2 repeat lies at 4403–4438; sequence CRVFENEQAKFEVEFEGEPNPTVKWYRESFPIQNSP. A disulfide bridge links Cys4625 with Cys4676. 8 disordered regions span residues 4803–4891, 5318–5368, 5413–5648, 5667–5701, 5718–5748, 5775–5982, 6034–6350, and 6364–6393; these read RTID…DKGV, DELV…QPEP, RVIP…EVDA, IKKT…VPQK, KKTK…EVVQ, KEEE…QRLL, KRVK…MPVD, and EEEV…EASV. Residues 4822–4841 are compositionally biased toward low complexity; that stretch reads PESPHAFQPGQQPGQQFGQF. The segment covering 4852–4863 has biased composition (basic residues); that stretch reads GRSRQKKPKVRS. Basic and acidic residues-rich tracts occupy residues 5344-5357, 5436-5447, 5541-5552, 5591-5621, and 5633-5645; these read QPQE…HDEL, RPKEAVKAEEIQ, QKPDEQKQELPK, IEEK…EKPE, and PKSE…HPDE. The TPR 3 repeat unit spans residues 5575–5613; it reads PVLWERKKKKPQPQDVIEEKLDVAPTKTYEKAVDVLPDE. A compositionally biased stretch (acidic residues) spans 5681–5697; that stretch reads EELFEEQPEEEISPEEE. 2 stretches are compositionally biased toward acidic residues: residues 5779 to 5792 and 5818 to 5860; these read IPTE…ETAE and DVEE…QDEI. Positions 5865 to 5874 are enriched in basic residues; it reads RKVKKAKKPK. Residues 5883–5904 are compositionally biased toward acidic residues; the sequence is EIEEDQPEEEVLQEEIIGEQEE. Positions 5910-5920 are enriched in basic residues; sequence RKVKSIKKPKK. Residues 5921–5971 are compositionally biased toward basic and acidic residues; it reads VVTEKTVDQTEQPEKPEESQAEEVKETVTEEPKKPKPAPEEAKVEQVEKIS. Positions 6034–6043 are enriched in basic residues; that stretch reads KRVKKKKPKT. Over residues 6049 to 6079 the composition is skewed to acidic residues; that stretch reads ESTEEPAEETEEFEEEATQPEEVQPVEEIPE. 6 stretches are compositionally biased toward basic and acidic residues: residues 6081–6092, 6099–6133, 6141–6169, 6195–6209, 6217–6234, and 6259–6268; these read PQVKEVADERKT, RKEE…EVRL, IKPE…EEKR, EAEH…KPEE, KRGE…EKKW, and PIEEQQKPEK. Over residues 6281 to 6290 the composition is skewed to acidic residues; it reads PESEEEELEL. Residues 6291 to 6306 are compositionally biased toward basic and acidic residues; that stretch reads EPLKLPEDKKPKEPKA. Residues 6307-6318 are compositionally biased toward basic residues; sequence KKEKKKKPKLKK. Composition is skewed to acidic residues over residues 6325–6349 and 6364–6373; these read EVSE…EMPV and EEEVVPTEET. 7 Ig-like domains span residues 6536-6624, 6633-6728, 6741-6830, 6841-6929, 6942-7034, 7066-7151, and 7189-7279; these read PRIT…TNII, PQFT…NILS, PTVT…VVVS, PRFI…ATVN, PRFV…VKIQ, PKII…VAVT, and PSLL…FDIS. A disulfide bridge connects residues Cys6557 and Cys6608. A disulfide bridge links Cys6964 with Cys7016. A coiled-coil region spans residues 7621–7663; it reads KIQVQTKQIAQMNTKIKKHKKHKQQEQEVSETTIQCEQKETLA. Disordered regions lie at residues 7773–7793, 9414–9440, 9485–9510, 9556–9582, 9627–9652, 9698–9724, 9769–9796, 9838–9865, 9911–9937, 9982–10008, 10053–10080, 10125–10149, 10195–10220, 10266–10291, 10337–10364, 10408–10433, 10479–10504, 10550–10576, 10621–10648, 10692–10717, 10763–10788, 10834–10860, 10905–10932, 11047–11073, 11118–11143, 11189–11216, 11260–11286, 11679–11703, and 11767–11795; these read AKTA…VKAQ, EEDD…EEIQ, EEDD…PEEI, EEDD…EIQE, TAEE…PEEI, ENDK…PEEI, EELD…RGPD, and TEPE…LETP. Over residues 7774-7783 the composition is skewed to basic and acidic residues; that stretch reads KTAESSKELP. Composition is skewed to acidic residues over residues 9429-9440, 9500-9510, 9571-9582, 9642-9652, 9713-9724, 9784-9796, 9855-9865, 9926-9937, 9997-10008, 10068-10080, 10139-10149, 10210-10220, 10281-10291, 10352-10364, 10423-10433, 10494-10504, 10565-10576, 10636-10648, 10707-10717, 10778-10788, 10849-10860, 10920-10932, 11062-11073, 11133-11143, 11204-11216, and 11275-11286; these read VPYEEEKPEEIQ, VPYEEEKPEEI, and VPYE…EIQE. Positions 11686–11699 are enriched in basic residues; it reads KPKKKTTKTRTFKK. A compositionally biased stretch (basic and acidic residues) spans 11780–11792; that stretch reads PTKDKTPKQKKTL. Residues 11872 to 11905 form a TPR 4 repeat; that stretch reads KTVLQPYQRTEMELPQRARRDSSFKQPVKLTPMK. Disordered regions lie at residues 12003–12201, 12451–12471, 12685–12767, 12943–12971, 13131–13154, 13325–13349, 13471–13492, 13554–13576, 13702–13792, 13891–13914, 13951–13994, 14073–14094, 14109–14322, 14354–14377, 14414–14448, 14533–14566, 14583–14720, and 14756–14789; these read FKHS…ADTK, TLQV…KKPE, TVDD…LPGP, IDHE…KEKS, IKKK…ETRP, QSFE…KPKK, EEYE…KSHN, EADK…PLKK, KVQK…KSPD, EEVQ…KAKK, MKRK…DEPK, TTVP…RTKK, EEEA…QVTT, EYEP…RKVK, PLDS…ETPV, EPEI…KVKK, KVDL…SELP, and VEES…KSKK. 6 stretches are compositionally biased toward basic and acidic residues: residues 12022–12035, 12044–12054, 12124–12134, 12183–12201, 12457–12471, and 12685–12709; these read ESDH…ELLH, EKIETPDESRK, MERTSDIREES, LNLR…ADTK, TEHE…KKPE, and TVDD…KISE. The segment covering 12731 to 12741 has biased composition (acidic residues); sequence HDEDLQTDEYS. Positions 12750-12760 are enriched in basic residues; sequence KSKKKSTKKQK. The span at 13141–13154 shows a compositional bias: basic and acidic residues; that stretch reads GPKEQVFEITETRP. The span at 13482–13492 shows a compositional bias: basic residues; it reads KKPKKKVKSHN. A TPR 5 repeat occupies 13566-13599; sequence QPIKKEKPLKKKKDVEYPVSLEAFDHTVKVVSEP. A compositionally biased stretch (basic and acidic residues) spans 13733 to 13747; it reads LVKEDLDQPIERALE. The span at 13771–13781 shows a compositional bias: basic residues; it reads PKPKKISKPKS. 2 stretches are compositionally biased toward basic and acidic residues: residues 13893–13906 and 13975–13984; these read VQEK…EKKA and EDKPVEKISE. Over residues 14221 to 14240 the composition is skewed to basic and acidic residues; that stretch reads TVEKPLEALHTDSDLEKPDV. The segment covering 14264–14274 has biased composition (low complexity); sequence KISSEQPKQPS. The segment covering 14282-14294 has biased composition (basic and acidic residues); that stretch reads VTEHDLKPEEEKP. Residues 14542–14554 are compositionally biased toward basic and acidic residues; sequence IEEHPEQSKEKLA. The segment covering 14555–14564 has biased composition (basic residues); that stretch reads PKPKKTVRKV. The segment covering 14583 to 14599 has biased composition (basic and acidic residues); that stretch reads KVDLEKYEKVEMPEKPV. The span at 14652–14662 shows a compositional bias: low complexity; that stretch reads ETTVDTTDIPE. A compositionally biased stretch (polar residues) spans 14664–14683; it reads TPTQTAQPEDTATAQITPSA. A compositionally biased stretch (basic and acidic residues) spans 14684–14697; it reads QEEKSTQDDTKDTI. Acidic residues predominate over residues 14756-14771; it reads VEESQPIVEEVEDEEP. One copy of the TPR 6 repeat lies at 14904–14936; it reads IPKTTDIGAIKDNGELSRNIEEAEEILKFKPHK. 8 disordered regions span residues 14956-15208, 15301-15329, 15425-15448, 15578-15597, 15697-15722, 15825-15876, 15951-15973, and 16181-16206; these read EKYI…VSVK, TRKK…IQPD, ISET…ETPK, IRVS…QFTV, EKPA…PKPE, EEPK…VEEP, ESQP…KAPI, and QEEE…KPLQ. Basic and acidic residues-rich tracts occupy residues 14967–14989, 15024–15046, 15069–15080, 15088–15097, 15109–15139, 15169–15179, 15189–15198, 15316–15325, 15425–15437, and 15578–15589; these read EKTP…DVKL, ELKQ…KDGE, QIEHPEIPEKVK, KPKDKSKSEP, PKEE…EIKL, IEDKAIDDEKK, QPKEQEIAKE, VTLKEPKEEQ, ISET…KPIE, and IRVSESEPKPEE. The segment covering 15703 to 15716 has biased composition (acidic residues); sequence IVEEEEPVVTEPIE. Basic and acidic residues predominate over residues 15951-15964; sequence ESQPEAVEDKEVSL. Positions 16183–16193 are enriched in acidic residues; the sequence is EEYEEGEDIEE. Residues 16409–16470 enclose the SH3 domain; sequence ENLNIMYSIC…PAQYLMEPEE (62 aa). Ig-like domains are found at residues 16501–16590, 16625–16719, 16728–16811, 16822–16916, 16919–17001, 17007–17091, 17097–17180, 17184–17270, and 17277–17363; these read PRFI…TELI, PTFS…ITLK, PQIL…ANLT, PPLF…VEVD, TFTK…STVE, PDFI…CELV, PEIV…AKLT, PLVD…TKLC, and PPVI…AEAS. Cys16940 and Cys16989 form a disulfide bridge. Residues 17374-17467 form the Fibronectin type-III 1 domain; that stretch reads APGTPQPLEI…LSPPIRLVPK (94 aa). Ig-like domains are found at residues 17473–17558 and 17563–17653; these read PSVQ…CRLK and PVLE…CTVQ. A disulfide bond links Cys17494 and Cys17542. 4 Fibronectin type-III domains span residues 17660 to 17755, 17760 to 17861, 17862 to 17958, and 17982 to 18078; these read RPQS…TKKF, PPRG…TPPS, PPQN…THAS, and PPTG…AMTA. The TPR 7 repeat unit spans residues 17694-17728; it reads LEKCDVQNNVWMKVSDFNKDIKSYAVQKLSMNAQY. The tract at residues 17741 to 17771 is disordered; sequence SEPTESDPVTITKKFEKPSPPRGPTTVSGMN.

It belongs to the protein kinase superfamily. CAMK Ser/Thr protein kinase family. In terms of assembly, interacts with Msp300; this interaction mediates the recruitment of Msp300 to the Z-disks. Expressed in the mesoderm at stage 11, several hours before myoblast fusion, and persists in most muscle cells, somatic, visceral and pharyngeal muscles and their precursors, until the third instar. Isoform A: Expressed in the indirect flight muscle (at protein level).

The protein localises to the cytoplasm. It is found in the nucleus. It localises to the chromosome. The protein resides in the myofibril. Its subcellular location is the sarcomere. The protein localises to the z line. Functionally, key component in the assembly and functioning of adult and embryonic striated muscles and muscle tendons. By providing connections at the level of individual microfilaments, it contributes to the fine balance of forces between the two halves of the sarcomere. The size and extensibility of the cross-links are the main determinants of sarcomere extensibility properties of muscle. In non-muscle cells, seems to play a role in chromosome condensation and chromosome segregation during mitosis. Might link the lamina network to chromatin or nuclear actin, or both during interphase. The chain is Titin (sls) from Drosophila melanogaster (Fruit fly).